The primary structure comprises 351 residues: Ribosomal RNA small subunit methyltransferase H (351 aa).

S-adenosyl-L-methionine-binding positions include 48-50 (GGY), aspartate 67, phenylalanine 94, aspartate 115, and glutamine 122. Positions 274-351 (AAQASRHVPG…PAPQGRGPRR (78 aa)) are disordered.

Belongs to the methyltransferase superfamily. RsmH family.

Its subcellular location is the cytoplasm. The catalysed reaction is cytidine(1402) in 16S rRNA + S-adenosyl-L-methionine = N(4)-methylcytidine(1402) in 16S rRNA + S-adenosyl-L-homocysteine + H(+). Specifically methylates the N4 position of cytidine in position 1402 (C1402) of 16S rRNA. The sequence is that of Ribosomal RNA small subunit methyltransferase H from Methylorubrum extorquens (strain PA1) (Methylobacterium extorquens).